Reading from the N-terminus, the 646-residue chain is UvrABC system protein C (646 aa).

Positions 16-95 constitute a GIY-YIG domain; that stretch reads VEPGVYRFRD…IKEFDPRFNV (80 aa). Residues 208-243 enclose the UVR domain; it reads DRFARALEQQMNAAAEQLDFERAARLRDDLSALKRA.

Belongs to the UvrC family. Interacts with UvrB in an incision complex.

It is found in the cytoplasm. Its function is as follows. The UvrABC repair system catalyzes the recognition and processing of DNA lesions. UvrC both incises the 5' and 3' sides of the lesion. The N-terminal half is responsible for the 3' incision and the C-terminal half is responsible for the 5' incision. The sequence is that of UvrABC system protein C from Mycobacterium bovis (strain BCG / Pasteur 1173P2).